An 85-amino-acid chain; its full sequence is Large ribosomal subunit protein bL27 (85 aa).

The segment at 1–22 (MAHKKGQGSTQNNRDSAGRRLG) is disordered.

It belongs to the bacterial ribosomal protein bL27 family.

The chain is Large ribosomal subunit protein bL27 from Sulfurimonas denitrificans (strain ATCC 33889 / DSM 1251) (Thiomicrospira denitrificans (strain ATCC 33889 / DSM 1251)).